The chain runs to 158 residues: Large ribosomal subunit protein eL24 (158 aa).

Positions 98-146 (LDASHKKAEAEKAVRELKQKKANDIEKKRADRKLQGKDVKAAKKAETKK) are enriched in basic and acidic residues. The disordered stretch occupies residues 98-158 (LDASHKKAEA…QPVGAKGGKK (61 aa)).

This sequence belongs to the eukaryotic ribosomal protein eL24 family.

This is Large ribosomal subunit protein eL24 (RPL24) from Tetrahymena thermophila (strain SB210).